The following is a 379-amino-acid chain: Queuine tRNA-ribosyltransferase (379 aa).

Residue Asp-94 is the Proton acceptor of the active site. Substrate is bound by residues 94-98, Asp-148, Gln-191, and Gly-218; that span reads DSGGF. Residues 249–255 form an RNA binding region; it reads GVGSPDS. The active-site Nucleophile is Asp-268. The segment at 273 to 277 is RNA binding; important for wobble base 34 recognition; it reads TRIAR. Cys-306, Cys-308, Cys-311, and His-337 together coordinate Zn(2+).

Belongs to the queuine tRNA-ribosyltransferase family. Homodimer. Within each dimer, one monomer is responsible for RNA recognition and catalysis, while the other monomer binds to the replacement base PreQ1. Requires Zn(2+) as cofactor.

It carries out the reaction 7-aminomethyl-7-carbaguanine + guanosine(34) in tRNA = 7-aminomethyl-7-carbaguanosine(34) in tRNA + guanine. Its pathway is tRNA modification; tRNA-queuosine biosynthesis. Catalyzes the base-exchange of a guanine (G) residue with the queuine precursor 7-aminomethyl-7-deazaguanine (PreQ1) at position 34 (anticodon wobble position) in tRNAs with GU(N) anticodons (tRNA-Asp, -Asn, -His and -Tyr). Catalysis occurs through a double-displacement mechanism. The nucleophile active site attacks the C1' of nucleotide 34 to detach the guanine base from the RNA, forming a covalent enzyme-RNA intermediate. The proton acceptor active site deprotonates the incoming PreQ1, allowing a nucleophilic attack on the C1' of the ribose to form the product. After dissociation, two additional enzymatic reactions on the tRNA convert PreQ1 to queuine (Q), resulting in the hypermodified nucleoside queuosine (7-(((4,5-cis-dihydroxy-2-cyclopenten-1-yl)amino)methyl)-7-deazaguanosine). This Listeria welshimeri serovar 6b (strain ATCC 35897 / DSM 20650 / CCUG 15529 / CIP 8149 / NCTC 11857 / SLCC 5334 / V8) protein is Queuine tRNA-ribosyltransferase.